The sequence spans 300 residues: Putative lysophosphatidic acid:oleoyl-CoA acyltransferase (300 aa).

The chain crosses the membrane as a helical span at residues 32 to 52 (WILIVVVMILRVPLCIISVTL). Positions 115–120 (HSSPLD) match the HXXXXD motif motif.

This sequence belongs to the 1-acyl-sn-glycerol-3-phosphate acyltransferase family.

The protein resides in the lipid droplet. It is found in the endoplasmic reticulum membrane. It localises to the golgi apparatus membrane. It catalyses the reaction a 1-acyl-sn-glycero-3-phosphate + an acyl-CoA = a 1,2-diacyl-sn-glycero-3-phosphate + CoA. Acyl-CoA-dependent lysophosphatidic acid acyltransferase with preference for oleoyl-CoA. Involved in triacylglyceride homeostasis and lipid droplet formation. Involved in vacuolar protein sorting. This is Putative lysophosphatidic acid:oleoyl-CoA acyltransferase (vps66) from Schizosaccharomyces pombe (strain 972 / ATCC 24843) (Fission yeast).